The primary structure comprises 251 residues: Carbohydrate deacetylase (251 aa).

Positions 59 and 122 each coordinate Mg(2+).

It belongs to the YdjC deacetylase family. Homodimer. Mg(2+) serves as cofactor.

Its function is as follows. Probably catalyzes the deacetylation of acetylated carbohydrates an important step in the degradation of oligosaccharides. This is Carbohydrate deacetylase from Vibrio parahaemolyticus serotype O3:K6 (strain RIMD 2210633).